The following is a 739-amino-acid chain: Transcription activator of gluconeogenesis MCYG_04674 (739 aa).

Positions methionine 1–glutamate 33 are enriched in polar residues. Positions methionine 1 to lysine 62 are disordered. Residues alanine 40–arginine 55 are compositionally biased toward basic and acidic residues. The segment at residues cysteine 65 to cysteine 93 is a DNA-binding region (zn(2)-C6 fungal-type). 5 disordered regions span residues glycine 174–serine 223, aspartate 264–glycine 308, serine 380–alanine 420, asparagine 537–alanine 574, and alanine 639–arginine 668. Polar residues-rich tracts occupy residues proline 267 to threonine 284 and proline 397 to isoleucine 411. Over residues glycine 547–serine 557 the composition is skewed to low complexity. The segment covering proline 562–alanine 574 has biased composition (polar residues). Residues asparagine 653–arginine 664 are compositionally biased toward low complexity.

Belongs to the ERT1/acuK family.

Its subcellular location is the nucleus. In terms of biological role, transcription factor which regulates nonfermentable carbon utilization. Activator of gluconeogenetic genes. The chain is Transcription activator of gluconeogenesis MCYG_04674 from Arthroderma otae (strain ATCC MYA-4605 / CBS 113480) (Microsporum canis).